We begin with the raw amino-acid sequence, 159 residues long: Gigasin-1 (159 aa).

Disordered stretches follow at residues 1-33 and 80-159; these read GKAT…HDQT and KESY…KYRR.

Component of the organic matrix of calcified shell layers.

In Magallana gigas (Pacific oyster), this protein is Gigasin-1.